The primary structure comprises 83 residues: RNA-binding protein Hfq (83 aa).

The Sm domain occupies Asp-11 to Val-71.

This sequence belongs to the Hfq family. Homohexamer.

Functionally, RNA chaperone that binds small regulatory RNA (sRNAs) and mRNAs to facilitate mRNA translational regulation in response to envelope stress, environmental stress and changes in metabolite concentrations. Also binds with high specificity to tRNAs. In Rhodospirillum rubrum (strain ATCC 11170 / ATH 1.1.1 / DSM 467 / LMG 4362 / NCIMB 8255 / S1), this protein is RNA-binding protein Hfq.